A 353-amino-acid chain; its full sequence is UPF0283 membrane protein YcjF (353 aa).

Residues 16-35 (KEESTSAFKAQQTFSEAESR) are disordered. Residues 20-31 (TSAFKAQQTFSE) are compositionally biased toward polar residues. 3 helical membrane-spanning segments follow: residues 70-90 (MVMG…VQWT), 100-120 (VALG…GSVV), and 213-233 (ESTL…FIAW).

Belongs to the UPF0283 family.

Its subcellular location is the cell inner membrane. The protein is UPF0283 membrane protein YcjF of Salmonella heidelberg (strain SL476).